A 289-amino-acid polypeptide reads, in one-letter code: 4-hydroxy-tetrahydrodipicolinate synthase (289 aa).

T45 is a binding site for pyruvate. Y133 functions as the Proton donor/acceptor in the catalytic mechanism. K161 functions as the Schiff-base intermediate with substrate in the catalytic mechanism. I200 serves as a coordination point for pyruvate.

The protein belongs to the DapA family. In terms of assembly, homotetramer; dimer of dimers.

The protein resides in the cytoplasm. The enzyme catalyses L-aspartate 4-semialdehyde + pyruvate = (2S,4S)-4-hydroxy-2,3,4,5-tetrahydrodipicolinate + H2O + H(+). It functions in the pathway amino-acid biosynthesis; L-lysine biosynthesis via DAP pathway; (S)-tetrahydrodipicolinate from L-aspartate: step 3/4. Its function is as follows. Catalyzes the condensation of (S)-aspartate-beta-semialdehyde [(S)-ASA] and pyruvate to 4-hydroxy-tetrahydrodipicolinate (HTPA). The polypeptide is 4-hydroxy-tetrahydrodipicolinate synthase (Coxiella burnetii (strain Dugway 5J108-111)).